The chain runs to 917 residues: Isoleucine--tRNA ligase (917 aa).

The 'HIGH' region signature appears at 59–69 (PYANGHIHIGH). Glu569 contributes to the L-isoleucyl-5'-AMP binding site. The short motif at 610–614 (KMSKS) is the 'KMSKS' region element. Lys613 lines the ATP pocket. Zn(2+) is bound by residues Cys890, Cys893, Cys905, and Cys908.

It belongs to the class-I aminoacyl-tRNA synthetase family. IleS type 1 subfamily. In terms of assembly, monomer. The cofactor is Zn(2+).

It is found in the cytoplasm. The catalysed reaction is tRNA(Ile) + L-isoleucine + ATP = L-isoleucyl-tRNA(Ile) + AMP + diphosphate. Its function is as follows. Catalyzes the attachment of isoleucine to tRNA(Ile). As IleRS can inadvertently accommodate and process structurally similar amino acids such as valine, to avoid such errors it has two additional distinct tRNA(Ile)-dependent editing activities. One activity is designated as 'pretransfer' editing and involves the hydrolysis of activated Val-AMP. The other activity is designated 'posttransfer' editing and involves deacylation of mischarged Val-tRNA(Ile). This Campylobacter jejuni subsp. jejuni serotype O:2 (strain ATCC 700819 / NCTC 11168) protein is Isoleucine--tRNA ligase.